We begin with the raw amino-acid sequence, 718 residues long: Manganese-exporting P-type ATPase (718 aa).

The region spanning 11 to 78 (GRMRVKVDWV…AIKGAAHVAA (68 aa)) is the HMA domain. 6 helical membrane passes run 87-105 (HSAEIRNTDVLRMVIGGVA), 128-146 (TVATGVTIFTGYPFLRGAL), 154-168 (AGTDALVSAATVASL), 177-191 (LTVLWLLNIGEYLQD), 327-351 (VGENFSRRFVPTSFIVSAIALLITG), and 357-375 (MTMLLIACPCAVGLSTPTA). The 4-aspartylphosphate intermediate role is filled by Asp-408. Mg(2+) contacts are provided by Asp-408, Thr-410, and Asp-610. 2 helical membrane passes run 661-680 (AVDVIRQNYGMSIAVNAAGL) and 690-709 (PVLAAILHNASSVAVVANSS).

This sequence belongs to the cation transport ATPase (P-type) (TC 3.A.3) family. Type IB subfamily.

The protein resides in the cell membrane. The enzyme catalyses Mn(2+)(in) + ATP + H2O = Mn(2+)(out) + ADP + phosphate + H(+). High affinity, slow turnover Mn(2+) transporting ATPase. This is Manganese-exporting P-type ATPase (ctpC) from Mycobacterium bovis (strain ATCC BAA-935 / AF2122/97).